The following is a 103-amino-acid chain: Large ribosomal subunit protein bL21 (103 aa).

It belongs to the bacterial ribosomal protein bL21 family. As to quaternary structure, part of the 50S ribosomal subunit. Contacts protein L20.

Its function is as follows. This protein binds to 23S rRNA in the presence of protein L20. In Cupriavidus necator (strain ATCC 17699 / DSM 428 / KCTC 22496 / NCIMB 10442 / H16 / Stanier 337) (Ralstonia eutropha), this protein is Large ribosomal subunit protein bL21.